A 60-amino-acid chain; its full sequence is Large ribosomal subunit protein uL30 (60 aa).

The protein belongs to the universal ribosomal protein uL30 family. Part of the 50S ribosomal subunit.

This chain is Large ribosomal subunit protein uL30, found in Nocardioides sp. (strain ATCC BAA-499 / JS614).